The following is an 83-amino-acid chain: Alpha-neurotoxin NTX-2 (83 aa).

The first 21 residues, 1–21, serve as a signal peptide directing secretion; that stretch reads MKTLLLTLLVVTIVCLDLGYT. Cystine bridges form between Cys-24–Cys-45, Cys-38–Cys-62, Cys-64–Cys-75, and Cys-76–Cys-81.

It belongs to the three-finger toxin family. Short-chain subfamily. Type I alpha-neurotoxin sub-subfamily. Expressed by the venom gland.

Its subcellular location is the secreted. Functionally, binds to muscle nicotinic acetylcholine receptor (nAChR) and inhibit acetylcholine from binding to the receptor, thereby impairing neuromuscular transmission. The sequence is that of Alpha-neurotoxin NTX-2 from Naja sputatrix (Malayan spitting cobra).